Consider the following 40-residue polypeptide: Photosystem II reaction center protein J (40 aa).

The helical transmembrane segment at 8–28 (IPLWLIGTVAGIPVIGLVGVF) threads the bilayer.

This sequence belongs to the PsbJ family. In terms of assembly, PSII is composed of 1 copy each of membrane proteins PsbA, PsbB, PsbC, PsbD, PsbE, PsbF, PsbH, PsbI, PsbJ, PsbK, PsbL, PsbM, PsbT, PsbX, PsbY, PsbZ, Psb30/Ycf12, at least 3 peripheral proteins of the oxygen-evolving complex and a large number of cofactors. It forms dimeric complexes.

It localises to the plastid. The protein localises to the chloroplast thylakoid membrane. Its function is as follows. One of the components of the core complex of photosystem II (PSII). PSII is a light-driven water:plastoquinone oxidoreductase that uses light energy to abstract electrons from H(2)O, generating O(2) and a proton gradient subsequently used for ATP formation. It consists of a core antenna complex that captures photons, and an electron transfer chain that converts photonic excitation into a charge separation. The protein is Photosystem II reaction center protein J of Hordeum jubatum (Foxtail barley).